The primary structure comprises 284 residues: Bifunctional protein FolD (284 aa).

NADP(+) is bound by residues 165 to 167 (GRG), Thr192, and Val233.

The protein belongs to the tetrahydrofolate dehydrogenase/cyclohydrolase family. As to quaternary structure, homodimer.

It carries out the reaction (6R)-5,10-methylene-5,6,7,8-tetrahydrofolate + NADP(+) = (6R)-5,10-methenyltetrahydrofolate + NADPH. The enzyme catalyses (6R)-5,10-methenyltetrahydrofolate + H2O = (6R)-10-formyltetrahydrofolate + H(+). The protein operates within one-carbon metabolism; tetrahydrofolate interconversion. Catalyzes the oxidation of 5,10-methylenetetrahydrofolate to 5,10-methenyltetrahydrofolate and then the hydrolysis of 5,10-methenyltetrahydrofolate to 10-formyltetrahydrofolate. This Corynebacterium glutamicum (strain R) protein is Bifunctional protein FolD.